The primary structure comprises 464 residues: UDP-glycosyltransferase 76F2 (464 aa).

UDP-alpha-D-glucose contacts are provided by residues S279, 338–340, 355–363, and 377–380; these read VNQ, HCGWNSTIE, and FSDQ.

Belongs to the UDP-glycosyltransferase family.

The chain is UDP-glycosyltransferase 76F2 (UGT76F2) from Arabidopsis thaliana (Mouse-ear cress).